We begin with the raw amino-acid sequence, 403 residues long: 4-hydroxyphenylpyruvate dioxygenase (403 aa).

VOC domains follow at residues 25–169 and 201–359; these read GYDH…LVER and RIDH…LFTK. His204, His287, and Glu370 together coordinate Fe cation.

This sequence belongs to the 4HPPD family. In terms of assembly, homodimer. Requires Fe cation as cofactor.

The enzyme catalyses 3-(4-hydroxyphenyl)pyruvate + O2 = homogentisate + CO2. The protein operates within amino-acid degradation; L-phenylalanine degradation; acetoacetate and fumarate from L-phenylalanine: step 3/6. 4-hydroxyphenylpyruvate dioxygenase; part of the L-tyrosine degradation gene cluster that mediates the biosynthesis of the brownish pigment pyomelanin as an alternative melanin. The 4-hydroxyphenylpyruvate dioxygenase hppD catalyzes the conversion of 4-hydroxyphenylpyruvate to homogentisic acid (HGA). The protein hmgX is crucial for this conversion and thus, probably functions as an accessory factor to mediate specific activity of hppD. The homogentisate 1,2-dioxygenase hmgA is then involved in the cleavage of the aromatic ring of HGA and its conversion to 4-maleylacetoacetate. When hmgA activity is lowered by the cell wall integrity (CWI) signaling pathway, HGA accumulates and leads to the production of pyomelanin through benzoquinone acetic acid after oxidation and polymerization. On the opposite, in non-stress conditions, both hppD and hmgA activities are balanced and HGA is degraded into 4-maleylacetoacetate. 4-maleylacetoacetate is further converted to 4-fumarylacetoacetate by the maleylacetoacetate isomerase maiA, which is degraded into fumarate and acetoacetate by the fumarylacetoacetase fahA. In Aspergillus fumigatus (strain ATCC MYA-4609 / CBS 101355 / FGSC A1100 / Af293) (Neosartorya fumigata), this protein is 4-hydroxyphenylpyruvate dioxygenase.